We begin with the raw amino-acid sequence, 362 residues long: Heat-inducible transcription repressor HrcA (362 aa).

This sequence belongs to the HrcA family.

Functionally, negative regulator of class I heat shock genes (grpE-dnaK-dnaJ and groELS operons). Prevents heat-shock induction of these operons. In Rhodopseudomonas palustris (strain ATCC BAA-98 / CGA009), this protein is Heat-inducible transcription repressor HrcA.